The chain runs to 485 residues: Glutamyl-tRNA(Gln) amidotransferase subunit A (485 aa).

Residues lysine 74 and serine 149 each act as charge relay system in the active site. Serine 173 serves as the catalytic Acyl-ester intermediate.

Belongs to the amidase family. GatA subfamily. As to quaternary structure, heterotrimer of A, B and C subunits.

The enzyme catalyses L-glutamyl-tRNA(Gln) + L-glutamine + ATP + H2O = L-glutaminyl-tRNA(Gln) + L-glutamate + ADP + phosphate + H(+). Allows the formation of correctly charged Gln-tRNA(Gln) through the transamidation of misacylated Glu-tRNA(Gln) in organisms which lack glutaminyl-tRNA synthetase. The reaction takes place in the presence of glutamine and ATP through an activated gamma-phospho-Glu-tRNA(Gln). The polypeptide is Glutamyl-tRNA(Gln) amidotransferase subunit A (Synechococcus sp. (strain RCC307)).